Consider the following 139-residue polypeptide: Actin-depolymerizing factor 4 (139 aa).

The ADF-H domain occupies 5–139 (SSGVAIHDDC…SLDALKDRVK (135 aa)).

The protein belongs to the actin-binding proteins ADF family. Interacts with LECRK1 (via kinase domain).

It is found in the cytoplasm. It localises to the cytoskeleton. Actin-depolymerizing protein. Severs actin filaments (F-actin) and binds to actin monomers. Involved in innate immunity. Required for the expression of defense-related genes PR1A, LOX2 and CHS1 upon biotic stresses. Required for basal resistance to the fungal blast (Magnaporthe grisea), bacterial blight (Xanthomonas oryzae pv. oryzae, Xoo) and the herbivorous insect brown planthopper (Nilaparvata lugens, BPH). Involved in the promotion of seed germination. Required for the expression of alpha-amylase genes during seed germination. This is Actin-depolymerizing factor 4 (ADF4) from Oryza sativa subsp. japonica (Rice).